A 515-amino-acid polypeptide reads, in one-letter code: SWI/SNF-related matrix-associated actin-dependent regulator of chromatin subfamily D member 1 (515 aa).

The segment at 1-128 is disordered; the sequence is MAARAGFQSV…RNHNAKKKKM (128 aa). Residues 14-23 show a composition bias toward gly residues; it reads GGAGASGGAG. Positions 43-167 are interaction with ESR1, NR1H4, NR3C1, PGR and SMARCA4; the sequence is APGQGLYRSP…DQTIMRKRLD (125 aa). Asymmetric dimethylarginine is present on residues Arg-68 and Arg-88. Residue Lys-101 forms a Glycyl lysine isopeptide (Lys-Gly) (interchain with G-Cter in SUMO2) linkage. Positions 104–117 are enriched in low complexity; the sequence is APQQIQQVQQQAVQ. Residues 168-474 are interaction with SMARCC1 and SMARCC2; sequence IQEALKRPIK…TMTDVVGNPE (307 aa). The interval 180 to 515 is necessary for GR/NR3C1-mediated remodeling and transcription from chromatin; required for GR/NR3C1 interaction with the BRG1/SMARCA4 complex in vivo; it reads RKLRIFISNT…LEQALGIRNT (336 aa). Residue Thr-203 is modified to Phosphothreonine. Lys-223 carries the post-translational modification N6-acetyllysine. Residues 290–367 enclose the SWIB/MDM2 domain; that stretch reads YQPPQFKLDP…PQRLHALLMP (78 aa). Positions 412 to 440 form a coiled coil; it reads ASQQEIATLDNKIHETIETINQLKTQREF.

This sequence belongs to the SMARCD family. In terms of assembly, component of the multiprotein chromatin-remodeling complexes SWI/SNF: SWI/SNF-A (BAF), SWI/SNF-B (PBAF) and related complexes. The canonical complex contains a catalytic subunit (either SMARCA4/BRG1/BAF190A or SMARCA2/BRM/BAF190B), and at least SMARCE1, ACTL6A/BAF53, SMARCC1/BAF155, SMARCC2/BAF170, and SMARCB1/SNF5/BAF47. Other subunits specific to each of the complexes may also be present permitting several possible combinations developmentally and tissue specific. Component of the BAF complex, which includes at least actin (ACTB), ARID1A/BAF250A, ARID1B/BAF250B, SMARCA2/BRM, SMARCA4/BRG1/BAF190A, ACTL6A/BAF53, ACTL6B/BAF53B, SMARCE1/BAF57, SMARCC1/BAF155, SMARCC2/BAF170, SMARCB1/SNF5/INI1, and one or more SMARCD1/BAF60A, SMARCD2/BAF60B, or SMARCD3/BAF60C. In muscle cells, the BAF complex also contains DPF3. Component of neural progenitors-specific chromatin remodeling complex (npBAF complex) composed of at least, ARID1A/BAF250A or ARID1B/BAF250B, SMARCD1/BAF60A, SMARCD3/BAF60C, SMARCA2/BRM/BAF190B, SMARCA4/BRG1/BAF190A, SMARCB1/BAF47, SMARCC1/BAF155, SMARCE1/BAF57, SMARCC2/BAF170, PHF10/BAF45A, ACTL6A/BAF53A and actin. Component of neuron-specific chromatin remodeling complex (nBAF complex) composed of at least, ARID1A/BAF250A or ARID1B/BAF250B, SMARCD1/BAF60A, SMARCD3/BAF60C, SMARCA2/BRM/BAF190B, SMARCA4/BRG1/BAF190A, SMARCB1/BAF47, SMARCC1/BAF155, SMARCE1/BAF57, SMARCC2/BAF170, DPF1/BAF45B, DPF3/BAF45C, ACTL6B/BAF53B and actin. Component of the SWI/SNF-B (PBAF) chromatin remodeling complex, at least composed of SMARCA4/BRG1, SMARCB1/BAF47/SNF5, ACTL6A/BAF53A or ACTL6B/BAF53B, SMARCE1/BAF57, SMARCD1/BAF60A, SMARCD2/BAF60B, perhaps SMARCD3/BAF60C, SMARCC1/BAF155, SMARCC2/BAF170, PBRM1/BAF180, ARID2/BAF200 and actin (ACTB). Component of SWI/SNF (GBAF) subcomplex, which includes at least BICRA or BICRAL (mutually exclusive), BRD9, SS18, SMARCA2/BRM, SMARCA4/BRG1/BAF190A, ACTL6A/BAF53, SMARCC1/BAF155, and SMARCD1/BAF60A. Specifically interacts with the VDR heterodimer complex. Interacts with ESR1, NR3C1, NR1H4, PGR, SMARCA4, SMARCC1 and SMARCC2. Interacts with DPF2. Interacts with DPF3a (isoform 2 of DPF3/BAF45C) and with HDGFL2 in a DPF3a-dependent manner. Interacts with FOS, FOSB isoform 1 and 2, FOSL1 and FOSL2. Interacts with AKIRIN2. In terms of tissue distribution, ubiquitous.

The protein localises to the nucleus. Involved in transcriptional activation and repression of select genes by chromatin remodeling (alteration of DNA-nucleosome topology). Component of SWI/SNF chromatin remodeling complexes that carry out key enzymatic activities, changing chromatin structure by altering DNA-histone contacts within a nucleosome in an ATP-dependent manner. Belongs to the neural progenitors-specific chromatin remodeling complex (npBAF complex) and the neuron-specific chromatin remodeling complex (nBAF complex). During neural development a switch from a stem/progenitor to a postmitotic chromatin remodeling mechanism occurs as neurons exit the cell cycle and become committed to their adult state. The transition from proliferating neural stem/progenitor cells to postmitotic neurons requires a switch in subunit composition of the npBAF and nBAF complexes. As neural progenitors exit mitosis and differentiate into neurons, npBAF complexes which contain ACTL6A/BAF53A and PHF10/BAF45A, are exchanged for homologous alternative ACTL6B/BAF53B and DPF1/BAF45B or DPF3/BAF45C subunits in neuron-specific complexes (nBAF). The npBAF complex is essential for the self-renewal/proliferative capacity of the multipotent neural stem cells. The nBAF complex along with CREST plays a role regulating the activity of genes essential for dendrite growth. Has a strong influence on vitamin D-mediated transcriptional activity from an enhancer vitamin D receptor element (VDRE). May be a link between mammalian SWI-SNF-like chromatin remodeling complexes and the vitamin D receptor (VDR) heterodimer. Mediates critical interactions between nuclear receptors and the BRG1/SMARCA4 chromatin-remodeling complex for transactivation. In Mus musculus (Mouse), this protein is SWI/SNF-related matrix-associated actin-dependent regulator of chromatin subfamily D member 1 (Smarcd1).